A 296-amino-acid polypeptide reads, in one-letter code: uncharacterized protein (296 aa).

The first 20 residues, 1 to 20 (MKKLLLIIITVFFAFNVAQA), serve as a signal peptide directing secretion.

This is an uncharacterized protein from Rickettsia felis (strain ATCC VR-1525 / URRWXCal2) (Rickettsia azadi).